The chain runs to 343 residues: Aspartate-semialdehyde dehydrogenase (343 aa).

Residues S20–V23 and R48–S49 contribute to the NADP(+) site. A phosphate-binding site is contributed by R108. Catalysis depends on C137, which acts as the Acyl-thioester intermediate. Q164 serves as a coordination point for substrate. S167–G168 lines the NADP(+) pocket. K221 lines the phosphate pocket. R243 serves as a coordination point for substrate. H250 functions as the Proton acceptor in the catalytic mechanism. Residue Q323 coordinates NADP(+).

Belongs to the aspartate-semialdehyde dehydrogenase family. Homodimer.

The enzyme catalyses L-aspartate 4-semialdehyde + phosphate + NADP(+) = 4-phospho-L-aspartate + NADPH + H(+). The protein operates within amino-acid biosynthesis; L-lysine biosynthesis via DAP pathway; (S)-tetrahydrodipicolinate from L-aspartate: step 2/4. It functions in the pathway amino-acid biosynthesis; L-methionine biosynthesis via de novo pathway; L-homoserine from L-aspartate: step 2/3. It participates in amino-acid biosynthesis; L-threonine biosynthesis; L-threonine from L-aspartate: step 2/5. Its function is as follows. Catalyzes the NADPH-dependent formation of L-aspartate-semialdehyde (L-ASA) by the reductive dephosphorylation of L-aspartyl-4-phosphate. This is Aspartate-semialdehyde dehydrogenase from Prochlorococcus marinus (strain SARG / CCMP1375 / SS120).